A 93-amino-acid polypeptide reads, in one-letter code: Parbolysin P3 (93 aa).

Cystine bridges form between Cys-16/Cys-37, Cys-22/Cys-33, and Cys-47/Cys-60.

Belongs to the worm cytolysin family. Localized within the skin and proboscis and are most readily isolated from body mucus secretions.

The protein resides in the secreted. Cytolysin that shows hemolytic activity (on bovine erythrocytes, HC(50)=5.75 mg/ml). This hemolytic activity is completely inhibited by small unilamelar vesicles composed of PC/PG, PC/PI and PC/PS in 1:1 molar ratios (with at least 100 mg/ml concentration). The protein is Parbolysin P3 of Parborlasia corrugatus (Antarctic nemertean worm).